We begin with the raw amino-acid sequence, 89 residues long: Large ribosomal subunit protein bL27 (89 aa).

It belongs to the bacterial ribosomal protein bL27 family.

The sequence is that of Large ribosomal subunit protein bL27 from Cytophaga hutchinsonii (strain ATCC 33406 / DSM 1761 / CIP 103989 / NBRC 15051 / NCIMB 9469 / D465).